The chain runs to 829 residues: Translation initiation factor IF-2 (829 aa).

Basic and acidic residues predominate over residues 128–137; that stretch reads QNAEEEKVEA. Residues 128 to 157 form a disordered region; it reads QNAEEEKVEASAKTVQNNEDIQPQTSKKKE. Over residues 140-152 the composition is skewed to polar residues; that stretch reads KTVQNNEDIQPQT. The region spanning 327-497 is the tr-type G domain; the sequence is TRAPVVTVMG…LLIAEMQDLK (171 aa). The tract at residues 336 to 343 is G1; sequence GHVDHGKT. Residue 336–343 participates in GTP binding; sequence GHVDHGKT. The interval 361 to 365 is G2; that stretch reads GITQH. The segment at 383 to 386 is G3; that stretch reads DTPG. GTP-binding positions include 383–387 and 437–440; these read DTPGH and NKID. Positions 437–440 are G4; sequence NKID. The segment at 473-475 is G5; it reads SAL.

It belongs to the TRAFAC class translation factor GTPase superfamily. Classic translation factor GTPase family. IF-2 subfamily.

Its subcellular location is the cytoplasm. In terms of biological role, one of the essential components for the initiation of protein synthesis. Protects formylmethionyl-tRNA from spontaneous hydrolysis and promotes its binding to the 30S ribosomal subunits. Also involved in the hydrolysis of GTP during the formation of the 70S ribosomal complex. This Rickettsia felis (strain ATCC VR-1525 / URRWXCal2) (Rickettsia azadi) protein is Translation initiation factor IF-2.